The chain runs to 81 residues: Cytochrome b559 subunit alpha (81 aa).

A helical membrane pass occupies residues 21 to 35; that stretch reads VIHALTIPALFLAGW. H23 is a binding site for heme.

It belongs to the PsbE/PsbF family. As to quaternary structure, heterodimer of an alpha subunit and a beta subunit. PSII is composed of 1 copy each of membrane proteins PsbA, PsbB, PsbC, PsbD, PsbE, PsbF, PsbH, PsbI, PsbJ, PsbK, PsbL, PsbM, PsbT, PsbX, PsbY, PsbZ, Psb30/Ycf12, peripheral proteins PsbO, CyanoQ (PsbQ), PsbU, PsbV and a large number of cofactors. It forms dimeric complexes. The cofactor is heme b.

Its subcellular location is the cellular thylakoid membrane. This b-type cytochrome is tightly associated with the reaction center of photosystem II (PSII). PSII is a light-driven water:plastoquinone oxidoreductase that uses light energy to abstract electrons from H(2)O, generating O(2) and a proton gradient subsequently used for ATP formation. It consists of a core antenna complex that captures photons, and an electron transfer chain that converts photonic excitation into a charge separation. This is Cytochrome b559 subunit alpha from Synechococcus sp. (strain JA-3-3Ab) (Cyanobacteria bacterium Yellowstone A-Prime).